The following is a 390-amino-acid chain: Chorismate synthase 1 (390 aa).

NADP(+)-binding residues include R39 and R45. Positions 95-117 (EQEEKEMKRKVTKPRPGHADLNG) are disordered. Residues 132–134 (RSS), 253–254 (NA), G298, 313–317 (KPIPT), and R339 each bind FMN.

This sequence belongs to the chorismate synthase family. As to quaternary structure, homotetramer. The cofactor is FMNH2.

It catalyses the reaction 5-O-(1-carboxyvinyl)-3-phosphoshikimate = chorismate + phosphate. It participates in metabolic intermediate biosynthesis; chorismate biosynthesis; chorismate from D-erythrose 4-phosphate and phosphoenolpyruvate: step 7/7. Functionally, catalyzes the anti-1,4-elimination of the C-3 phosphate and the C-6 proR hydrogen from 5-enolpyruvylshikimate-3-phosphate (EPSP) to yield chorismate, which is the branch point compound that serves as the starting substrate for the three terminal pathways of aromatic amino acid biosynthesis. This reaction introduces a second double bond into the aromatic ring system. The chain is Chorismate synthase 1 from Bacillus thuringiensis (strain Al Hakam).